We begin with the raw amino-acid sequence, 134 residues long: Putative toxin MJ0605 (134 aa).

Belongs to the UPF0332 family.

In terms of biological role, putative toxin component of a putative type VII toxin-antitoxin (TA) system. Its cognate antitoxin might be MJ0604. This Methanocaldococcus jannaschii (strain ATCC 43067 / DSM 2661 / JAL-1 / JCM 10045 / NBRC 100440) (Methanococcus jannaschii) protein is Putative toxin MJ0605.